The following is a 119-amino-acid chain: Cytochrome c55X (119 aa).

An N-terminal signal peptide occupies residues 1-20 (MNAPPDFRRAASHALWLALA). Positions 51, 54, and 55 each coordinate heme c.

Post-translationally, binds 1 heme c group covalently per subunit.

Its subcellular location is the periplasm. Its function is as follows. Monoheme c-type cytochrome. This Pseudomonas aeruginosa (strain ATCC 15692 / DSM 22644 / CIP 104116 / JCM 14847 / LMG 12228 / 1C / PRS 101 / PAO1) protein is Cytochrome c55X (nirC).